The following is a 328-amino-acid chain: Sin3 histone deacetylase corepressor complex component SDS3 (328 aa).

The tract at residues 1-64 (MSAAALLAPA…TDLAKHDEED (64 aa)) is disordered. Position 2 is an N-acetylserine (S2). The mediates interaction with USP17L2 stretch occupies residues 2 to 170 (SAAALLAPAP…IENEKLTMEL (169 aa)). Residues 10–21 (APAPAGAPPAPE) are compositionally biased toward pro residues. Acidic residues-rich tracts occupy residues 23–37 (YPEEDEELESAEDDE) and 45–54 (SDEDTEDASE). Residues S32 and S45 each carry the phosphoserine modification. The residue at position 49 (T49) is a Phosphothreonine. Residue S53 is modified to Phosphoserine. The stretch at 64 to 171 (DFVEMKEQMY…ENEKLTMELT (108 aa)) forms a coiled coil. Glycyl lysine isopeptide (Lys-Gly) (interchain with G-Cter in SUMO2) cross-links involve residues K69, K178, and K201. The disordered stretch occupies residues 226–252 (LKSPKRPASPSSPEHLPTTPAESPAQR). Residues S228, S234, and S237 each carry the phosphoserine modification. T244 is subject to Phosphothreonine.

This sequence belongs to the SDS3 family. In terms of assembly, homodimer. Component of the SIN3 histone deacetylase (HDAC) corepressor complex. Interacts with SIN3A. Interaction with SIN3B enhances the interaction between SIN3B and HDAC1 to form a complex. Interacts with HCFC1. Component of a mSin3A corepressor complex that contains SIN3A, SAP130, SUDS3/SAP45, ARID4B/SAP180, HDAC1 and HDAC2. Interacts with USP17L2; the interaction is direct. Interacts with FOXK2. In terms of processing, polyubiquitinated. 'Lys-63'-polyubiquitinated SUDS3 positively regulates histone deacetylation. Regulated through deubiquitination by USP17L2/USP17 that cleaves 'Lys-63'-linked ubiquitin chains.

Its subcellular location is the nucleus. Its function is as follows. Regulatory protein which represses transcription and augments histone deacetylase activity of HDAC1. May have a potential role in tumor suppressor pathways through regulation of apoptosis. May function in the assembly and/or enzymatic activity of the mSin3A corepressor complex or in mediating interactions between the complex and other regulatory complexes. This Bos taurus (Bovine) protein is Sin3 histone deacetylase corepressor complex component SDS3 (SUDS3).